The primary structure comprises 673 residues: ATP-dependent DNA helicase Rep (673 aa).

Residues 1–280 (MRLNPGQQQA…IKLEQNYRSS (280 aa)) form the UvrD-like helicase ATP-binding domain. Residues 22–29 (AGAGSGKT) and R278 each bind ATP. In terms of domain architecture, UvrD-like helicase C-terminal spans 281–562 (GRILKAANIL…QLMTLHASKG (282 aa)).

Belongs to the helicase family. UvrD subfamily. In terms of assembly, homodimer in association with DNA.

The catalysed reaction is Couples ATP hydrolysis with the unwinding of duplex DNA by translocating in the 3'-5' direction.. The enzyme catalyses ATP + H2O = ADP + phosphate + H(+). With respect to regulation, binding to DNA induces dimerization, which is required for DNA helicase activity. Helicase activity is stimulated by PriC. Functionally, rep helicase is a single-stranded (ss)DNA-dependent ATPase involved in DNA replication; it can initiate unwinding at a nick in the DNA. It binds to ssDNA and acts in a progressive fashion along the DNA in the 3' to 5' direction. Binds double-stranded (ds)DNA with a 5' ss- but not 3' ss-extension and forked structures with either lagging or leading ssDNA. Part of the PriC-Rep pathway for restart of stalled replication forks, which reloads the DnaB replicative helicase on sites other than the origin of replication. The chain is ATP-dependent DNA helicase Rep from Escherichia coli (strain K12).